The sequence spans 354 residues: Ferrochelatase (354 aa).

Positions 214 and 295 each coordinate Fe cation.

The protein belongs to the ferrochelatase family.

It is found in the cytoplasm. It catalyses the reaction heme b + 2 H(+) = protoporphyrin IX + Fe(2+). It functions in the pathway porphyrin-containing compound metabolism; protoheme biosynthesis; protoheme from protoporphyrin-IX: step 1/1. Its function is as follows. Catalyzes the ferrous insertion into protoporphyrin IX. The protein is Ferrochelatase of Burkholderia ambifaria (strain MC40-6).